Consider the following 590-residue polypeptide: MAWMLDCLFASAFEPRPRRVSVLGGAPGQNSDRSMDMVSIHSLSELERLKLQETAYHELVARHFLSEFKPDRALPTDRPNTLEKWFLMLRGQDRAASLKTFGIRLEEVLVNELTRRKQRELTPTMQVEDINGSTGRRRRGNVVQRMLGRMRRFFSRRRNEPTLPREFTRRGRRGAVSADSADELENGALLLQILQLSQLSSPIGQRLLGSKRKMSLNPIAQQIPQIVETCCKFIEKHGLSSVGIFTIEYSLRRVLELRELFDKGLDIVLDDSVNVHDVAELLKEFFREMKDPLLPDDLYMSFLLTATLKPKDQVSALQLLVYLMPPCHSDTLERLLKALHKITENCEDSIGVDGQLVPGNRMTSTNLALVFGTALLKKGKLANKESRKTKLGIDHYVASVNVVRAMIDNWDILFQVPPHIQKEVAKRVWKSSPEALDFIRRRNLRKIQSARIKMEEDALLSDPVENSAEAQAAILAQSQPFDEDPEGAPDVHEVLNDNLNYDFEDESDFEDQDHLDLAEVPYLDVIPNNEDTDSDADVIPGPSEEPAVPASTAGSPDKEEGAAGNPPNADRPLPRVPQGKKGKFATRFFP.

The 201-residue stretch at 214-414 (MSLNPIAQQI…AMIDNWDILF (201 aa)) folds into the Rho-GAP domain. The disordered stretch occupies residues 526 to 590 (IPNNEDTDSD…KGKFATRFFP (65 aa)).

In terms of assembly, may interacts (via the Rho-GAP domain) with the active form of RAC1.

In terms of biological role, GTPase activator for the Rho-type GTPases by converting them to an inactive GDP-bound state. In Mus musculus (Mouse), this protein is Rho GTPase-activating protein 36 (Arhgap36).